The chain runs to 201 residues: Anthranilate synthase component 2 (201 aa).

The Glutamine amidotransferase type-1 domain occupies 1 to 199 (MLLMIDNYDS…LRQQGGVRGE (199 aa)). 52–54 (GPC) serves as a coordination point for L-glutamine. C79 (nucleophile; for GATase activity) is an active-site residue. L-glutamine is bound by residues Q83 and 129–130 (SL). Catalysis depends on for GATase activity residues H173 and E175.

In terms of assembly, heterotetramer consisting of two non-identical subunits: a beta subunit (TrpG) and a large alpha subunit (TrpE).

It carries out the reaction chorismate + L-glutamine = anthranilate + pyruvate + L-glutamate + H(+). It participates in amino-acid biosynthesis; L-tryptophan biosynthesis; L-tryptophan from chorismate: step 1/5. In terms of biological role, part of a heterotetrameric complex that catalyzes the two-step biosynthesis of anthranilate, an intermediate in the biosynthesis of L-tryptophan. In the first step, the glutamine-binding beta subunit (TrpG) of anthranilate synthase (AS) provides the glutamine amidotransferase activity which generates ammonia as a substrate that, along with chorismate, is used in the second step, catalyzed by the large alpha subunit of AS (TrpE) to produce anthranilate. In the absence of TrpG, TrpE can synthesize anthranilate directly from chorismate and high concentrations of ammonia. This Pseudomonas aeruginosa (strain ATCC 15692 / DSM 22644 / CIP 104116 / JCM 14847 / LMG 12228 / 1C / PRS 101 / PAO1) protein is Anthranilate synthase component 2.